The following is a 1400-amino-acid chain: Bromodomain-containing protein 4 (1400 aa).

Residues 1 to 58 (MSTESGPGTRLRNLPVMGDGLETSQMSTTQAQAQPQPANAASTNPPPPETSNPNKPKR) form a disordered region. The segment covering 23 to 43 (TSQMSTTQAQAQPQPANAAST) has biased composition (low complexity). The Bromo 1 domain maps to 58-164 (RQTNQLQYLL…KLFLQKINEL (107 aa)). Lys99 is covalently cross-linked (Glycyl lysine isopeptide (Lys-Gly) (interchain with G-Cter in SUMO2)). Disordered regions lie at residues 176–353 (AKGR…KISE) and 461–616 (EPEE…YEEK). Positions 197–212 (PNTTQASTSPQTQTPQ) are enriched in low complexity. Over residues 244 to 267 (PPQPLQTPSPVPPQPPPPPAPVPQ) the composition is skewed to pro residues. Positions 321–337 (PRRESSRPVKPPKKDVP) are enriched in basic and acidic residues. Residues 349 to 458 (SKISEQLKCC…DVFEMRFAKM (110 aa)) enclose the Bromo 2 domain. At Ser471 the chain carries Phosphoserine. The segment covering 479-498 (KVVAPPSSSDSSSDSSSDSD) has biased composition (low complexity). Phosphoserine; by CK2 is present on residues Ser485, Ser489, and Ser493. An NPS region region spans residues 485–504 (SSSDSSSDSSSDSDSSTDDS). Ser495 is modified (phosphoserine). Phosphoserine; by CK2 occurs at positions 499, 500, and 504. The tract at residues 525 to 580 (QLAALSQPQQNKPKKKEKDKKEKKKEKHKKKEEVEENKKSKTKELPPKKTKKNNSS) is BID region. Basic residues predominate over residues 536-554 (KPKKKEKDKKEKKKEKHKK). Over residues 555–571 (KEEVEENKKSKTKELPP) the composition is skewed to basic and acidic residues. A Glycyl lysine isopeptide (Lys-Gly) (interchain with G-Cter in SUMO2) cross-link involves residue Lys586. Residues 601–683 (ESEEEDKCKP…SCLRKKRKPQ (83 aa)) enclose the NET domain. At Ser602 the chain carries Phosphoserine. Basic and acidic residues predominate over residues 606-616 (DKCKPMSYEEK). Residues Lys646 and Lys695 each participate in a glycyl lysine isopeptide (Lys-Gly) (interchain with G-Cter in SUMO2) cross-link. The interval 675-1125 (CLRKKRKPQA…GCPPASPAAV (451 aa)) is disordered. Positions 700–713 (SSSESESTSESSSS) are enriched in low complexity. The segment covering 725-745 (KSKKKGHTGRDQKKHHHHHHP) has biased composition (basic residues). Pro residues-rich tracts occupy residues 748–787 (QPAPAPVPQQPPPPPQQPPPPPPPQQQQQQPPPPPPPPSM), 835–848 (PELPPHLPQPPEHS), 883–892 (PPKPTRPPAV), and 900–909 (PLLPQPPMAQ). Residues 928-938 (MQMQLYLQQLQ) show a composition bias toward low complexity. Pro residues-rich tracts occupy residues 955-966 (QPPPPLPPPPHP), 975-1000 (PQPPPPPPPQPQPPPQQQHQPPPRPV), and 1013-1037 (QPPPPPGQQPTHPPPGQQPPPPQPA). Positions 1050-1400 (RHHKSDPYSA…LLSIFEENLF (351 aa)) are C-terminal (CTD) region. Lys1053 is covalently cross-linked (Glycyl lysine isopeptide (Lys-Gly) (interchain with G-Cter in SUMO2)). The span at 1075–1084 (QMPQFQSLTH) shows a compositional bias: polar residues. Over residues 1085 to 1095 (QSPPQQNVQPK) the composition is skewed to low complexity. Lys1147 is subject to N6-acetyllysine; alternate. Lys1147 participates in a covalent cross-link: Glycyl lysine isopeptide (Lys-Gly) (interchain with G-Cter in SUMO1); alternate. Lys1147 is covalently cross-linked (Glycyl lysine isopeptide (Lys-Gly) (interchain with G-Cter in SUMO2); alternate). Phosphoserine is present on residues Ser1153 and Ser1162. The disordered stretch occupies residues 1155 to 1377 (IIRSEPFSTS…KREQERRRRE (223 aa)). A compositionally biased stretch (basic and acidic residues) spans 1211–1232 (PDKDKQKQEPKTPVAPKKDLKI). Lys1233 participates in a covalent cross-link: Glycyl lysine isopeptide (Lys-Gly) (interchain with G-Cter in SUMO2). 2 positions are modified to phosphoserine: Ser1237 and Ser1240. Low complexity predominate over residues 1247-1258 (TTPSSTAKSSSD). Over residues 1259–1320 (SFEHFRRAAR…AHEEARRRQE (62 aa)) the composition is skewed to basic and acidic residues. Positions 1321-1357 (QQQQQQQQRQEQQQQQQQAAAVAAASAPQAQSSQPQS) are enriched in low complexity. The segment covering 1361–1377 (QQRELARKREQERRRRE) has biased composition (basic and acidic residues).

This sequence belongs to the BET family. Binds acetylated histone H4. Interacts with p53/TP53; the interaction is direct. Interacts (via CTD region) with CDK9 and CCNT1, acting as an associated component of P-TEFb complex. Interacts with RELA (when acetylated at 'Lys-310'). Interacts (via NET domain) with NSD3, CHD4, BICRA and ATAD5. The interaction with BICRA bridges BRD4 to the GBAF complex. Interacts (via NET domain) with JMJD6 (via JmjC and N-terminal domains); the interaction is stronger in presence of ssRNA and recruits JMJD6 on distal enhancers. Interacts with NSD3. Interacts with NIPBL. Post-translationally, phosphorylation by CK2 disrupt the intramolecular binding between the bromo domain 2 and the NPS region and promotes binding between the NPS and the BID regions, leading to activate the protein and promote binding to acetylated histones. In absence of phosphorylation, BRD4 does not localize to p53/TP53 target gene promoters, phosphorylation promoting recruitment to p53/TP53 target promoters.

It localises to the nucleus. It is found in the chromosome. Its function is as follows. Chromatin reader protein that recognizes and binds acetylated histones and plays a key role in transmission of epigenetic memory across cell divisions and transcription regulation. Remains associated with acetylated chromatin throughout the entire cell cycle and provides epigenetic memory for postmitotic G1 gene transcription by preserving acetylated chromatin status and maintaining high-order chromatin structure. During interphase, plays a key role in regulating the transcription of signal-inducible genes by associating with the P-TEFb complex and recruiting it to promoters. Also recruits P-TEFb complex to distal enhancers, so called anti-pause enhancers in collaboration with JMJD6. BRD4 and JMJD6 are required to form the transcriptionally active P-TEFb complex by displacing negative regulators such as HEXIM1 and 7SKsnRNA complex from P-TEFb, thereby transforming it into an active form that can then phosphorylate the C-terminal domain (CTD) of RNA polymerase II. Regulates differentiation of naive CD4(+) T-cells into T-helper Th17 by promoting recruitment of P-TEFb to promoters. Promotes phosphorylation of 'Ser-2' of the C-terminal domain (CTD) of RNA polymerase II. According to a report, directly acts as an atypical protein kinase and mediates phosphorylation of 'Ser-2' of the C-terminal domain (CTD) of RNA polymerase II; these data however need additional evidences in vivo. In addition to acetylated histones, also recognizes and binds acetylated RELA, leading to further recruitment of the P-TEFb complex and subsequent activation of NF-kappa-B. Also acts as a regulator of p53/TP53-mediated transcription: following phosphorylation by CK2, recruited to p53/TP53 specific target promoters. This chain is Bromodomain-containing protein 4 (Brd4), found in Mus musculus (Mouse).